Reading from the N-terminus, the 345-residue chain is Small ribosomal subunit biogenesis GTPase RsgA (345 aa).

The disordered stretch occupies residues 1-36 (MSKNKLSKGQERRVQANHQRRLQQRERGAAHWDDQP). Positions 23-34 (QQRERGAAHWDD) are enriched in basic and acidic residues. Positions 103–273 (RSVLTRPDVY…LIDSPGVREL (171 aa)) constitute a CP-type G domain. GTP is bound by residues 159 to 162 (NKID) and 213 to 221 (GQSGVGKSS). Positions 297, 302, 304, and 310 each coordinate Zn(2+).

Belongs to the TRAFAC class YlqF/YawG GTPase family. RsgA subfamily. In terms of assembly, monomer. Associates with 30S ribosomal subunit, binds 16S rRNA. Requires Zn(2+) as cofactor.

It localises to the cytoplasm. Functionally, one of several proteins that assist in the late maturation steps of the functional core of the 30S ribosomal subunit. Helps release RbfA from mature subunits. May play a role in the assembly of ribosomal proteins into the subunit. Circularly permuted GTPase that catalyzes slow GTP hydrolysis, GTPase activity is stimulated by the 30S ribosomal subunit. The sequence is that of Small ribosomal subunit biogenesis GTPase RsgA from Sodalis glossinidius (strain morsitans).